Consider the following 116-residue polypeptide: Large ribosomal subunit protein uL18 (116 aa).

The protein belongs to the universal ribosomal protein uL18 family. Part of the 50S ribosomal subunit; part of the 5S rRNA/L5/L18/L25 subcomplex. Contacts the 5S and 23S rRNAs.

Functionally, this is one of the proteins that bind and probably mediate the attachment of the 5S RNA into the large ribosomal subunit, where it forms part of the central protuberance. The chain is Large ribosomal subunit protein uL18 from Shewanella piezotolerans (strain WP3 / JCM 13877).